The primary structure comprises 289 residues: MTRLRAVLLATVIALLGACAAPTPPAEARRPMPAGQPTAGKAEVLWLGQAATRITTPGGKVIVVDPWLTTNPKTPPGFKQLSALGKVDLILVTHAHSDHLGDAPALARLTNAPIYNGGGLGQALVSLGMVPAAQAQRFGKSGTVMPFGPTGPRITAVHAEHSSELALKNPATGKDETHYGGEPVGYIIELENGFKIWHMGDTGLFGDMRLIGEVYKPDLVLIPIGGHFTMGPQEAAIAVRDLIRPRFAIPIHYQTSPQLSGTPEAFKAALGAGAAAGVIVPQPGEKVDF.

It belongs to the UPF0173 family.

This chain is UPF0173 metal-dependent hydrolase H16_A2129, found in Cupriavidus necator (strain ATCC 17699 / DSM 428 / KCTC 22496 / NCIMB 10442 / H16 / Stanier 337) (Ralstonia eutropha).